An 85-amino-acid polypeptide reads, in one-letter code: Beta-defensin 18 (85 aa).

A signal peptide spans 1-23 (MQSAMKLFFIFLIFVFSVSCGPS). 3 disulfides stabilise this stretch: cysteine 39/cysteine 65, cysteine 46/cysteine 60, and cysteine 50/cysteine 66.

This sequence belongs to the beta-defensin family.

Its subcellular location is the secreted. In terms of biological role, has antibacterial activity. The polypeptide is Beta-defensin 18 (Defb18) (Rattus norvegicus (Rat)).